Consider the following 1955-residue polypeptide: Rootletin (1955 aa).

Coiled-coil stretches lie at residues 29–58, 162–223, 284–1303, 1368–1579, and 1607–1863; these read EENRRNRQVIQDINDQLQRFRQRANAESIE, EENL…QQHT, LMRK…AVES, VGVT…EELR, and RRWE…RTKG. Disordered stretches follow at residues 321-341, 391-451, 504-551, 907-935, and 961-998; these read VTENYMKSEEKANERQRDLKR, LTTK…KKLD, LKER…RSLK, EKLNEQNDGDRAEWSNERNRLESSKNEAV, and RDLEDSHEKSRDLDDKLRKMELTDEEKEEDRKKEQKTL. 2 stretches are compositionally biased toward basic and acidic residues: residues 326–341 and 396–451; these read MKSEEKANERQRDLKR and GEID…KKLD. Composition is skewed to basic and acidic residues over residues 907 to 931, 961 to 982, and 989 to 998; these read EKLNEQNDGDRAEWSNERNRLESSK, RDLEDSHEKSRDLDDKLRKMEL, and EDRKKEQKTL.

The protein belongs to the rootletin family. Expressed in head ciliated neurons.

It localises to the cytoplasm. The protein resides in the cytoskeleton. The protein localises to the cilium basal body. Its subcellular location is the cilium axoneme. Major structural component of the ciliary rootlet, a cytoskeletal-like structure in ciliated cells which originates from the basal body at the proximal end of a cilium and extends proximally toward the cell nucleus. Required for cilia integrity and function in sensory neurons. Maintains cilia integrity, partly by modulating the assembly and transport of intraflagellar proteins along the ciliary axoneme. Required for normal mating behavior and normal responses to environmental and chemical stimuli. This Caenorhabditis elegans protein is Rootletin.